Reading from the N-terminus, the 78-residue chain is Small ribosomal subunit protein bS18c (78 aa).

It belongs to the bacterial ribosomal protein bS18 family. In terms of assembly, part of the 30S ribosomal subunit.

The protein localises to the plastid. It is found in the chloroplast. In Oltmannsiellopsis viridis (Marine flagellate), this protein is Small ribosomal subunit protein bS18c.